The sequence spans 43 residues: GCKKDRKPCSYQADCCNCCPIGTCAPSTNWILPGCSTGPFMAR.

Cystine bridges form between Cys2-Cys16, Cys9-Cys19, Cys15-Cys24, and Cys18-Cys35. The residue at position 41 (Met41) is a D-methionine. Position 43 (Arg43) is a propeptide, removed by a carboxypeptidase.

This sequence belongs to the conotoxin I1 superfamily. Expressed by the venom duct.

The protein localises to the secreted. In terms of biological role, iota-conotoxins bind to voltage-gated sodium channels (Nav) and act as agonists by shifting the voltage-dependence of activation to more hyperpolarized levels. Produces general excitatory symptoms. The polypeptide is Iota-conotoxin-like S11.2 (Conus striatus (Striated cone)).